Here is a 408-residue protein sequence, read N- to C-terminus: Acetate kinase (408 aa).

Asparagine 7 contacts Mg(2+). Lysine 14 is a binding site for ATP. Arginine 91 contributes to the substrate binding site. Aspartate 148 serves as the catalytic Proton donor/acceptor. ATP is bound by residues 208 to 212 (HLGNG), 283 to 285 (DFR), and 331 to 335 (GIGEN). Glutamate 384 lines the Mg(2+) pocket.

It belongs to the acetokinase family. Homodimer. It depends on Mg(2+) as a cofactor. The cofactor is Mn(2+).

The protein resides in the cytoplasm. The enzyme catalyses acetate + ATP = acetyl phosphate + ADP. It functions in the pathway metabolic intermediate biosynthesis; acetyl-CoA biosynthesis; acetyl-CoA from acetate: step 1/2. In terms of biological role, catalyzes the formation of acetyl phosphate from acetate and ATP. Can also catalyze the reverse reaction. This Methanosarcina mazei (strain ATCC BAA-159 / DSM 3647 / Goe1 / Go1 / JCM 11833 / OCM 88) (Methanosarcina frisia) protein is Acetate kinase.